Consider the following 472-residue polypeptide: RING-H2 finger protein ATL13 (472 aa).

Residues 51 to 71 traverse the membrane as a helical segment; that stretch reads ILLIIIILSIIFFISGLLHLL. Residues 134-176 form an RING-type; atypical zinc finger; sequence CAVCLCEFETEDKLRLLPKCSHAFHMDCIDTWLLSHSTCPLCR. Positions 320–340 are disordered; the sequence is VSTKKQSSKNRGLPGHRTAMS.

It belongs to the RING-type zinc finger family. ATL subfamily.

Its subcellular location is the membrane. The enzyme catalyses S-ubiquitinyl-[E2 ubiquitin-conjugating enzyme]-L-cysteine + [acceptor protein]-L-lysine = [E2 ubiquitin-conjugating enzyme]-L-cysteine + N(6)-ubiquitinyl-[acceptor protein]-L-lysine.. The protein operates within protein modification; protein ubiquitination. In Arabidopsis thaliana (Mouse-ear cress), this protein is RING-H2 finger protein ATL13 (ATL13).